A 371-amino-acid polypeptide reads, in one-letter code: Maltose/maltodextrin import ATP-binding protein MalK (371 aa).

An ABC transporter domain is found at 4–234 (VQLQNVTKAW…PADRFVAGFI (231 aa)). ATP is bound at residue 36–43 (GPSGCGKS).

This sequence belongs to the ABC transporter superfamily. Maltooligosaccharide importer (TC 3.A.1.1.1) family. In terms of assembly, the complex is composed of two ATP-binding proteins (MalK), two transmembrane proteins (MalG and MalK) and a solute-binding protein (MalE).

The protein localises to the cell inner membrane. It carries out the reaction D-maltose(out) + ATP + H2O = D-maltose(in) + ADP + phosphate + H(+). In terms of biological role, part of the ABC transporter complex MalEFGK involved in maltose/maltodextrin import. Responsible for energy coupling to the transport system. The protein is Maltose/maltodextrin import ATP-binding protein MalK of Escherichia coli O6:K15:H31 (strain 536 / UPEC).